The chain runs to 163 residues: MNLEQLINVLGLLVWIAARAVSRVGPHGSGLVYRELHDFYGYLQLDLLGPVVAGNRSVRTWREQADRARGTFVRRSGLNTSHILPVGGLSGGSGTLPAGLYRPEEEVFLLLNRCHGPLSTPKSACLAEVGVANASFLSRFNVGDFHGASWENGTAPDGEPGVC.

An N-terminal signal peptide occupies residues 1-22; it reads MNLEQLINVLGLLVWIAARAVS.

The protein belongs to the HHV-5 US34 protein family.

The protein is Protein US34 (US34) of Human cytomegalovirus (strain Merlin) (HHV-5).